Reading from the N-terminus, the 712-residue chain is Protein SDA1 homolog (712 aa).

Threonine 234 is modified (phosphothreonine). Residue serine 236 is modified to Phosphoserine. 2 disordered regions span residues threonine 488–isoleucine 573 and valine 662–lysine 712. 2 stretches are compositionally biased toward acidic residues: residues isoleucine 491–aspartate 501 and glycine 516–glutamate 559. Basic and acidic residues predominate over residues glutamate 560–arginine 572. 2 stretches are compositionally biased toward basic residues: residues arginine 671–lysine 692 and alanine 700–lysine 712.

The protein belongs to the SDA1 family.

It is found in the nucleus. The protein resides in the nucleolus. Functionally, required for 60S pre-ribosomal subunits export to the cytoplasm. The polypeptide is Protein SDA1 homolog (Mys45A) (Drosophila melanogaster (Fruit fly)).